Reading from the N-terminus, the 71-residue chain is Protein translocase subunit SecE (71 aa).

Residues 43-63 (VAGVGILAVGAIGFIIYVLLT) traverse the membrane as a helical segment.

It belongs to the SecE/SEC61-gamma family. Component of the Sec protein translocase complex. Heterotrimer consisting of SecY (alpha), SecG (beta) and SecE (gamma) subunits. The heterotrimers can form oligomers, although 1 heterotrimer is thought to be able to translocate proteins. Interacts with the ribosome. May interact with SecDF, and other proteins may be involved.

It localises to the cell membrane. Essential subunit of the Sec protein translocation channel SecYEG. Clamps together the 2 halves of SecY. May contact the channel plug during translocation. This is Protein translocase subunit SecE from Methanosarcina barkeri (strain Fusaro / DSM 804).